The following is a 415-amino-acid chain: F-box protein At3g13820 (415 aa).

One can recognise an F-box domain in the interval 1-50 (MTTMSNLPAEVLEEILSRTPVTSLRTMRSTCKKWNNLSKKKIIPEAARKQ). Disordered stretches follow at residues 209–229 (NDYD…EDDD) and 387–415 (KQPK…KIIG). Residues 210 to 229 (DYDDQEDEEEEDDEEYEDDD) are compositionally biased toward acidic residues. Over residues 403-415 (NKNKKGRKIKIIG) the composition is skewed to basic residues.

This chain is F-box protein At3g13820, found in Arabidopsis thaliana (Mouse-ear cress).